A 1288-amino-acid polypeptide reads, in one-letter code: MADPAAPAPAQAQAAAAPTPAAAPAAAAPPPAPATDSASGPSSDSGPEAGSQRLLFSHDLVSGRYRGSVHFGLVRLIHGEDSDSEGDDDGRGSSGCSEAGGAGHEEGRASPLRRGYVRVQWYPEGVKQHVKETKLKLEDRSVVPRDVVRHMRSTDSQCGTVIDVNIDCAVKLIGTNCIIYPVNSKDLQHIWPFMYGDYIAYDCWLGKVYDLKNQIILKLSNGARCSMNTEDGAKLYDVCPHVSDSGLFFDDSYGFYPGQVLIGPAKIFSSVQWLSGVKPVLSTKSKFRVVVEEVQVVELKVTWITKSFCPGGTDSVSPPPSIITQENLGRVKRLGCFDHAQRQLGERCLYVFPAKVEPAKIAWECPEKNCAQGEGSMAKKVKRLLKKQVVRIMSCTPDTQCPRDHSMEDPDKKGEARAGSEIGSASPEEQPDGSASPVEMQDEGSEELQETCEPLPPFLLKEGGDDGLHSAEQDADDEAADDTDDTSSVTSSASSTTSSQSGSGTGRKKSIPLSIKNLKRKHKRKKNKVTRDFKPGDRVAVEVVTTMTSADVMWQDGSVECNIRSNDLFPVHHLDNNEFCPGDFVVDKRVQSCPDPAVYGVVQSGDHVGRTCMVKWFKLRPSGDDVELIGEEEDVSVYDIADHPDFRFRTTDIVIRIGNTEDGALPKEDEPSVGQVARVDVSSKVEVVWADNSKTIILPQHLYNIESEIEESDYDSVEGSSSGASSDEWEDDSDSWETDNGLVDDEHPKIEELAAILPAEQPTAPEEDKGVVISEEAATAAIQGAVAMAAPVAGLMEKAGKDGPPKSFRELKEAIKILESLKNMTVEQLLTGSPTSPTVEPEKPTREKKFLDDIKKLQENLKKTLDNVAIAEEEKMEAVPDTERKEEKPEVQSPVKAEWPSETPVLCQQCGGRPGVTFTSAKGEVFSVLEFAPSNHSFKKIEFQPPEAKKFFSTVRKEMALLATSLPDGIMVKTFEDRMDLFSALIKGPTRTPYEDGLYLFDIQLPNIYPAVPPHFCYLSQCSGRLNPNLYDNGKVCVSLLGTWIGKGTERWTSKSSLLQVLISIQGLILVNEPYYNEAGFDSDRGLQEGYENSRCYNEMALIRVVQSMTQLVRRPPEVFEQEIRQHFSVGGWRLVNRIESWLETHAMQERAQVMPNGALKDSSSLEPMAAAELSDSGREEPEDVGMAPGEASQGSDSEGGAQGPASASRDHTEQTETAPDASAPPSVRPKRRRKSYRSFLPEKSGYPDIGFPLFPLSKGFIKSIRGVLTQFRAALLEAGMPESTEDK.

Low complexity-rich tracts occupy residues 1–26 and 34–47; these read MADP…APAA and ATDS…DSGP. 2 disordered regions span residues 1-51 and 80-109; these read MADP…EAGS and EDSD…EGRA. Residues Ser45, Ser82, Ser84, and Ser394 each carry the phosphoserine modification. 2 disordered regions span residues 396–529 and 711–743; these read TPDT…KNKV and ESDY…NGLV. Over residues 401-418 the composition is skewed to basic and acidic residues; sequence CPRDHSMEDPDKKGEARA. At Ser436 the chain carries Phosphoserine. Residues 440–450 show a composition bias toward acidic residues; it reads MQDEGSEELQE. Over residues 462–472 the composition is skewed to basic and acidic residues; sequence EGGDDGLHSAE. The span at 473–485 shows a compositional bias: acidic residues; the sequence is QDADDEAADDTDD. Phosphothreonine is present on residues Thr483 and Thr486. The segment covering 486 to 502 has biased composition (low complexity); it reads TSSVTSSASSTTSSQSG. Ser510 is subject to Phosphoserine. A compositionally biased stretch (basic residues) spans 517–528; it reads NLKRKHKRKKNK. Residues 717-726 show a composition bias toward low complexity; sequence VEGSSSGASS. A compositionally biased stretch (acidic residues) spans 727–737; the sequence is DEWEDDSDSWE. A coiled-coil region spans residues 809–879; the sequence is RELKEAIKIL…IAEEEKMEAV (71 aa). Position 833 is a phosphoserine (Ser833). Thr835 carries the phosphothreonine modification. Residue Ser836 is modified to Phosphoserine. Residues 872–890 show a composition bias toward basic and acidic residues; that stretch reads EEEKMEAVPDTERKEEKPE. Positions 872-899 are disordered; it reads EEEKMEAVPDTERKEEKPEVQSPVKAEW. Residue Ser893 is modified to Phosphoserine. The UBC core domain maps to 950–1110; sequence KFFSTVRKEM…ALIRVVQSMT (161 aa). Cys1037 serves as the catalytic Glycyl thioester intermediate. The segment at 1158-1247 is disordered; that stretch reads GALKDSSSLE…RSFLPEKSGY (90 aa).

Belongs to the ubiquitin-conjugating enzyme family. Interacts with CPNE1 (via VWFA domain) and CPNE4 (via VWFA domain). Interacts with UBR2. Post-translationally, phosphorylated. Phosphorylation affects subcellular location. Ubiquitinated: autoubiquitinates, possibly affecting its subcellular location. As to expression, highly expressed in reticulocytes.

Its subcellular location is the cytoplasm. The protein localises to the nucleus. It catalyses the reaction S-ubiquitinyl-[E1 ubiquitin-activating enzyme]-L-cysteine + [acceptor protein]-L-lysine = [E1 ubiquitin-activating enzyme]-L-cysteine + N(6)-monoubiquitinyl-[acceptor protein]-L-lysine.. Its pathway is protein modification; protein ubiquitination. With respect to regulation, inhibited by inorganic arsenite such as phenylarsenoxides. Functionally, E2/E3 hybrid ubiquitin-protein ligase that displays both E2 and E3 ligase activities and mediates monoubiquitination of target proteins. Negatively regulates TRAF6-mediated NF-kappa-B activation independently of its E2 activity. Acts as a positive regulator of BMP7 signaling by mediating monoubiquitination of SMAD6, thereby regulating adipogenesis. Mediates monoubiquitination at different sites of the nuclear localization signal (NLS) of BAP1, leading to cytoplasmic retention of BAP1. Also able to monoubiquitinate the NLS of other chromatin-associated proteins, such as INO80 and CXXC1, affecting their subcellular location. Acts as a regulator of retrograde transport by assisting the TRIM27:MAGEL2 E3 ubiquitin ligase complex to mediate 'Lys-63'-linked ubiquitination of WASHC1, leading to promote endosomal F-actin assembly. The protein is (E3-independent) E2 ubiquitin-conjugating enzyme UBE2O (Ube2o) of Mus musculus (Mouse).